Here is a 225-residue protein sequence, read N- to C-terminus: Ribonuclease 3 (225 aa).

An RNase III domain is found at 7 to 129 (IPRLCRTLGY…IIGAIYLDSE (123 aa)). Mg(2+) is bound at residue E42. D46 is a catalytic residue. The Mg(2+) site is built by D115 and E118. E118 is an active-site residue. The DRBM domain maps to 155 to 225 (DPKTLLQEHL…AAQVLELMKK (71 aa)).

Belongs to the ribonuclease III family. Homodimer. Mg(2+) is required as a cofactor.

The protein localises to the cytoplasm. It carries out the reaction Endonucleolytic cleavage to 5'-phosphomonoester.. Digests double-stranded RNA. Involved in the processing of primary rRNA transcript to yield the immediate precursors to the large and small rRNAs (23S and 16S). Processes some mRNAs, and tRNAs when they are encoded in the rRNA operon. Processes pre-crRNA and tracrRNA of type II CRISPR loci if present in the organism. The protein is Ribonuclease 3 of Shewanella halifaxensis (strain HAW-EB4).